Here is a 388-residue protein sequence, read N- to C-terminus: Zinc finger CCCH domain-containing protein 47 (388 aa).

Disordered stretches follow at residues 1–130 (MADP…MAPL) and 144–282 (PLHE…TPSA). Composition is skewed to basic and acidic residues over residues 61 to 109 (AAND…KSEV) and 181 to 193 (PDNH…HLPR). The span at 260-274 (ASSSSSSSSAGQQGS) shows a compositional bias: low complexity. C3H1-type zinc fingers lie at residues 321-348 (HHKI…HGEE) and 359-388 (GGGG…HGGV).

In Oryza sativa subsp. japonica (Rice), this protein is Zinc finger CCCH domain-containing protein 47.